The sequence spans 153 residues: UPF0158 protein PA5073 (153 aa).

This sequence belongs to the UPF0158 family.

The sequence is that of UPF0158 protein PA5073 from Pseudomonas aeruginosa (strain ATCC 15692 / DSM 22644 / CIP 104116 / JCM 14847 / LMG 12228 / 1C / PRS 101 / PAO1).